Here is a 310-residue protein sequence, read N- to C-terminus: Porphobilinogen deaminase (310 aa).

C242 is modified (S-(dipyrrolylmethanemethyl)cysteine).

Belongs to the HMBS family. As to quaternary structure, monomer. Requires dipyrromethane as cofactor.

It catalyses the reaction 4 porphobilinogen + H2O = hydroxymethylbilane + 4 NH4(+). The protein operates within porphyrin-containing compound metabolism; protoporphyrin-IX biosynthesis; coproporphyrinogen-III from 5-aminolevulinate: step 2/4. Functionally, tetrapolymerization of the monopyrrole PBG into the hydroxymethylbilane pre-uroporphyrinogen in several discrete steps. In Shewanella baltica (strain OS155 / ATCC BAA-1091), this protein is Porphobilinogen deaminase.